The following is a 312-amino-acid chain: Isoflavone reductase homolog (312 aa).

Residues 10–16 (GGTGYVG), Arg35, and Lys44 each bind NADP(+). The active-site Proton acceptor is the Lys138. Residue Arg142 participates in NADP(+) binding. His270 contributes to the substrate binding site.

Belongs to the NmrA-type oxidoreductase family. Isoflavone reductase subfamily.

This is Isoflavone reductase homolog from Lupinus albus (White lupine).